A 431-amino-acid polypeptide reads, in one-letter code: Adenylosuccinate synthetase (431 aa).

Residues glycine 13–lysine 19 and glycine 41–threonine 43 each bind GTP. Catalysis depends on aspartate 14, which acts as the Proton acceptor. Mg(2+) contacts are provided by aspartate 14 and glycine 41. IMP-binding positions include aspartate 14–lysine 17, asparagine 39–histidine 42, threonine 130, arginine 144, glutamine 225, threonine 240, and arginine 304. Histidine 42 acts as the Proton donor in catalysis. Serine 300–arginine 306 contacts substrate. Residues arginine 306, lysine 332 to aspartate 334, and serine 414 to glycine 416 each bind GTP.

This sequence belongs to the adenylosuccinate synthetase family. As to quaternary structure, homodimer. Mg(2+) is required as a cofactor.

It localises to the cytoplasm. It catalyses the reaction IMP + L-aspartate + GTP = N(6)-(1,2-dicarboxyethyl)-AMP + GDP + phosphate + 2 H(+). It participates in purine metabolism; AMP biosynthesis via de novo pathway; AMP from IMP: step 1/2. Plays an important role in the de novo pathway of purine nucleotide biosynthesis. Catalyzes the first committed step in the biosynthesis of AMP from IMP. The polypeptide is Adenylosuccinate synthetase (Bordetella petrii (strain ATCC BAA-461 / DSM 12804 / CCUG 43448)).